Here is a 269-residue protein sequence, read N- to C-terminus: Shikimate dehydrogenase (NADP(+)) (269 aa).

Residues 17–19 (SKS) and threonine 64 contribute to the shikimate site. Lysine 68 acts as the Proton acceptor in catalysis. Aspartate 80 contacts NADP(+). Shikimate-binding residues include asparagine 89 and aspartate 105. NADP(+) is bound by residues 130–134 (GAGGA), 154–159 (NRTHAK), and methionine 213. Tyrosine 215 is a shikimate binding site. Residue glycine 237 participates in NADP(+) binding.

It belongs to the shikimate dehydrogenase family. In terms of assembly, homodimer.

The catalysed reaction is shikimate + NADP(+) = 3-dehydroshikimate + NADPH + H(+). Its pathway is metabolic intermediate biosynthesis; chorismate biosynthesis; chorismate from D-erythrose 4-phosphate and phosphoenolpyruvate: step 4/7. Involved in the biosynthesis of the chorismate, which leads to the biosynthesis of aromatic amino acids. Catalyzes the reversible NADPH linked reduction of 3-dehydroshikimate (DHSA) to yield shikimate (SA). This Neisseria polysaccharea protein is Shikimate dehydrogenase (NADP(+)).